A 493-amino-acid polypeptide reads, in one-letter code: MATFKDACFHYRKITKLNRELLRIGANSVWIPVSSNKIKGWCIECCQLTELTFCHGCSLAHVCQWCIQNKRCFLDNEPHLLKLRTFESPITKEKLQCIIDLYNLLFPINPGIINRFKKIVNQRKCRNEFEQSWYNQLLFPITLNAAVFKFHSREVYVFGLYEGSSSCINLPYRIVNCIDLYDRLLLDQINFERMSSLPASLQSVYANKYFKLSRLPSMKLKQIYYSDFSKQNLINKCKIKSRIVLRNLTEFTWDSQISLHYDVINNREKILTALSTSSLKRFETHDLNLGRIKADIFELGHHCKPNFISSNHWQPASNVSQCRWCNVKYVFRNMDWKMESMYNELLSFIQACYKSNVNVGNCSSIENAYPLVKDMIWHSITKYIDQTIEKLFNVMNPVEVDGQQVISFHWQIDVALYIHIKMILKTETLPFALTLYQFGSIIKGIVNQWYDVTELDYLPLCTEQTDKLVKLEEEGKISEEYELLISDSEDDDQ.

Positions 1 to 81 are RNA-binding; the sequence is MATFKDACFH…CFLDNEPHLL (81 aa). The interval 42 to 79 is zinc-binding domain; the sequence is CIECCQLTELTFCHGCSLAHVCQWCIQNKRCFLDNEPH. The important for cytoskeleton localization stretch occupies residues 82–176; it reads KLRTFESPIT…CINLPYRIVN (95 aa). The interval 318–493 is interaction with host IRF3; that stretch reads NVSQCRWCNV…LISDSEDDDQ (176 aa). Positions 483 to 486 match the pLxIS motif motif; that stretch reads LLIS.

The protein belongs to the rotavirus NSP1 family. In terms of assembly, interacts (via C-terminus) with host IRF3; this interaction leads to IRF3 degradation. Interacts with host IRF7; this interaction leads to IRF7 degradation. Interacts with host CUL1 and CUL3.

It is found in the host cytoplasm. It localises to the host cytoskeleton. Functionally, plays a role in the inhibition of host innate immunity by inducing the degradation of key host factors required to activate interferon production such as IRF3, IRF5 or IRF7. Associates with components of cullin RING ligases (CRLs) including CUL1 or CUL3, which are essential multisubunit ubiquitination complexes, to modulate their activities. This is Non-structural protein 1 from Rotavirus A (isolate RVA/Dog/United States/K9/1981/G3P5A[3]) (RV-A).